Here is a 117-residue protein sequence, read N- to C-terminus: Iron-sulfur cluster insertion protein ErpA (117 aa).

Residues Cys-45, Cys-109, and Cys-111 each contribute to the iron-sulfur cluster site.

It belongs to the HesB/IscA family. In terms of assembly, homodimer. The cofactor is iron-sulfur cluster.

Functionally, required for insertion of 4Fe-4S clusters for at least IspG. The chain is Iron-sulfur cluster insertion protein ErpA from Blochmanniella pennsylvanica (strain BPEN).